We begin with the raw amino-acid sequence, 381 residues long: Succinyl-diaminopimelate desuccinylase (381 aa).

Residue H68 coordinates Zn(2+). D70 is a catalytic residue. A Zn(2+)-binding site is contributed by D101. The active-site Proton acceptor is E135. Residues E136, E164, and H350 each contribute to the Zn(2+) site.

The protein belongs to the peptidase M20A family. DapE subfamily. As to quaternary structure, homodimer. Requires Zn(2+) as cofactor. It depends on Co(2+) as a cofactor.

The catalysed reaction is N-succinyl-(2S,6S)-2,6-diaminopimelate + H2O = (2S,6S)-2,6-diaminopimelate + succinate. The protein operates within amino-acid biosynthesis; L-lysine biosynthesis via DAP pathway; LL-2,6-diaminopimelate from (S)-tetrahydrodipicolinate (succinylase route): step 3/3. In terms of biological role, catalyzes the hydrolysis of N-succinyl-L,L-diaminopimelic acid (SDAP), forming succinate and LL-2,6-diaminopimelate (DAP), an intermediate involved in the bacterial biosynthesis of lysine and meso-diaminopimelic acid, an essential component of bacterial cell walls. The sequence is that of Succinyl-diaminopimelate desuccinylase from Neisseria meningitidis serogroup C / serotype 2a (strain ATCC 700532 / DSM 15464 / FAM18).